Consider the following 189-residue polypeptide: GTP cyclohydrolase 1 (189 aa).

Zn(2+) contacts are provided by C79, H82, and C150.

Belongs to the GTP cyclohydrolase I family. Homomer.

It catalyses the reaction GTP + H2O = 7,8-dihydroneopterin 3'-triphosphate + formate + H(+). It participates in cofactor biosynthesis; 7,8-dihydroneopterin triphosphate biosynthesis; 7,8-dihydroneopterin triphosphate from GTP: step 1/1. The protein is GTP cyclohydrolase 1 of Rickettsia rickettsii (strain Iowa).